Here is a 576-residue protein sequence, read N- to C-terminus: Arginine--tRNA ligase (576 aa).

A 'HIGH' region motif is present at residues 122–132 (PNVAKEMHVGH).

It belongs to the class-I aminoacyl-tRNA synthetase family. In terms of assembly, monomer.

It localises to the cytoplasm. It carries out the reaction tRNA(Arg) + L-arginine + ATP = L-arginyl-tRNA(Arg) + AMP + diphosphate. This is Arginine--tRNA ligase from Pectobacterium carotovorum subsp. carotovorum (strain PC1).